Consider the following 123-residue polypeptide: Ribosome-binding factor A (123 aa).

It belongs to the RbfA family. In terms of assembly, monomer. Binds 30S ribosomal subunits, but not 50S ribosomal subunits or 70S ribosomes.

The protein localises to the cytoplasm. Functionally, one of several proteins that assist in the late maturation steps of the functional core of the 30S ribosomal subunit. Associates with free 30S ribosomal subunits (but not with 30S subunits that are part of 70S ribosomes or polysomes). Required for efficient processing of 16S rRNA. May interact with the 5'-terminal helix region of 16S rRNA. This is Ribosome-binding factor A from Dechloromonas aromatica (strain RCB).